We begin with the raw amino-acid sequence, 419 residues long: UDP-N-acetylglucosamine 1-carboxyvinyltransferase 2 (419 aa).

24–25 is a binding site for phosphoenolpyruvate; sequence KN. A UDP-N-acetyl-alpha-D-glucosamine-binding site is contributed by R94. C118 (proton donor) is an active-site residue. C118 bears the 2-(S-cysteinyl)pyruvic acid O-phosphothioketal mark. UDP-N-acetyl-alpha-D-glucosamine contacts are provided by residues 123–127, D307, and I329; that span reads RPIDQ.

This sequence belongs to the EPSP synthase family. MurA subfamily.

The protein localises to the cytoplasm. The catalysed reaction is phosphoenolpyruvate + UDP-N-acetyl-alpha-D-glucosamine = UDP-N-acetyl-3-O-(1-carboxyvinyl)-alpha-D-glucosamine + phosphate. It functions in the pathway cell wall biogenesis; peptidoglycan biosynthesis. Functionally, cell wall formation. Adds enolpyruvyl to UDP-N-acetylglucosamine. This is UDP-N-acetylglucosamine 1-carboxyvinyltransferase 2 from Staphylococcus epidermidis (strain ATCC 35984 / DSM 28319 / BCRC 17069 / CCUG 31568 / BM 3577 / RP62A).